The chain runs to 568 residues: AP2-like ethylene-responsive transcription factor PLT2 (568 aa).

Residues 151 to 171 show a composition bias toward low complexity; the sequence is ASPAETSADNSSSTTNTSGGA. The interval 151-173 is disordered; it reads ASPAETSADNSSSTTNTSGGAIV. 2 consecutive DNA-binding regions (AP2/ERF) follow at residues 190–256 and 292–350; these read IYRG…TNFP and MYRG…TNFE. The interval 548 to 568 is disordered; the sequence is WNSGESAQGSNPGGVFTMWNE.

This sequence belongs to the AP2/ERF transcription factor family. AP2 subfamily. In terms of processing, stabilized in root meristems by reactive oxygen species (ROS) mediated oxidative post-translational modification triggered by RGF1 hormone peptide in a RITF1-dependent manner. As to expression, expressed in roots, seedlings, flowers, and siliques. Also detected at low levels in leaves. In roots, specifically detected in the distal root meristem, including the QC. This tissue specificity is regulated by auxin gradient and depends on PIN proteins.

Its subcellular location is the nucleus. Functionally, probably acts as a transcriptional activator. Binds to the GCC-box pathogenesis-related promoter element. May be involved in the regulation of gene expression by stress factors and by components of stress signal transduction pathways. Master regulator of basal/root fate. Essential for root quiescent center (QC) and columella specification, stem cell activity, as well as for establishment of the stem cell niche during embryogenesis. Modulates the root polar auxin transport by regulating the distribution of PIN genes. Essential role in respecifying pattern and polarity in damaged roots. Direct target of the transcriptional corepressor TPL. Expression levels and patterns regulated post-transcriptionally by root meristem growth factors (RGFs). This Arabidopsis thaliana (Mouse-ear cress) protein is AP2-like ethylene-responsive transcription factor PLT2.